The chain runs to 245 residues: Sec-independent protein translocase protein TatC (245 aa).

6 consecutive transmembrane segments (helical) span residues 17–37 (FISV…RSYI), 73–93 (FFAA…KFVA), 107–127 (FVSF…FVVV), 159–179 (VVVA…FAKI), 191–207 (FRIA…FMTP), and 210–230 (VLSQ…SILI).

This sequence belongs to the TatC family. In terms of assembly, the Tat system comprises two distinct complexes: a TatABC complex, containing multiple copies of TatA, TatB and TatC subunits, and a separate TatA complex, containing only TatA subunits. Substrates initially bind to the TatABC complex, which probably triggers association of the separate TatA complex to form the active translocon.

The protein resides in the cell inner membrane. In terms of biological role, part of the twin-arginine translocation (Tat) system that transports large folded proteins containing a characteristic twin-arginine motif in their signal peptide across membranes. Together with TatB, TatC is part of a receptor directly interacting with Tat signal peptides. The protein is Sec-independent protein translocase protein TatC of Campylobacter jejuni subsp. jejuni serotype O:2 (strain ATCC 700819 / NCTC 11168).